The sequence spans 121 residues: Large ribosomal subunit protein bL12 (121 aa).

The protein belongs to the bacterial ribosomal protein bL12 family. As to quaternary structure, homodimer. Part of the ribosomal stalk of the 50S ribosomal subunit. Forms a multimeric L10(L12)X complex, where L10 forms an elongated spine to which 2 to 4 L12 dimers bind in a sequential fashion. Binds GTP-bound translation factors.

Functionally, forms part of the ribosomal stalk which helps the ribosome interact with GTP-bound translation factors. Is thus essential for accurate translation. This Pseudomonas fluorescens (strain ATCC BAA-477 / NRRL B-23932 / Pf-5) protein is Large ribosomal subunit protein bL12.